We begin with the raw amino-acid sequence, 399 residues long: Elongation factor Tu (399 aa).

Residues 10–207 (KTHMNVGTIG…AVDSYFPDPV (198 aa)) form the tr-type G domain. The G1 stretch occupies residues 19–26 (GHIDHGKT). 19 to 26 (GHIDHGKT) is a GTP binding site. Thr-26 serves as a coordination point for Mg(2+). A G2 region spans residues 60–64 (GITIN). The G3 stretch occupies residues 81 to 84 (DCPG). GTP contacts are provided by residues 81 to 85 (DCPGH) and 136 to 139 (NKVD). A G4 region spans residues 136 to 139 (NKVD). A G5 region spans residues 174-176 (SAL).

This sequence belongs to the TRAFAC class translation factor GTPase superfamily. Classic translation factor GTPase family. EF-Tu/EF-1A subfamily. In terms of assembly, monomer.

Its subcellular location is the cytoplasm. It carries out the reaction GTP + H2O = GDP + phosphate + H(+). GTP hydrolase that promotes the GTP-dependent binding of aminoacyl-tRNA to the A-site of ribosomes during protein biosynthesis. The polypeptide is Elongation factor Tu (Petrotoga mobilis (strain DSM 10674 / SJ95)).